A 255-amino-acid chain; its full sequence is Post-GPI attachment to proteins factor 2 (255 aa).

Transmembrane regions (helical) follow at residues 25-45 (LAAL…SLLF), 80-100 (LAIF…LEYY), 111-131 (LGIL…CLSF), 143-163 (NAFV…YLLN), 185-205 (LFLV…RHNA), and 209-229 (AGVY…NMGF).

Belongs to the PGAP2 family.

Its subcellular location is the golgi apparatus membrane. It localises to the endoplasmic reticulum membrane. Its function is as follows. Involved in the lipid remodeling steps of GPI-anchor maturation. Required for stable expression of GPI-anchored proteins at the cell surface. This Drosophila pseudoobscura pseudoobscura (Fruit fly) protein is Post-GPI attachment to proteins factor 2.